We begin with the raw amino-acid sequence, 135 residues long: Holo-[acyl-carrier-protein] synthase (135 aa).

Mg(2+) contacts are provided by Asp-9 and Glu-63.

This sequence belongs to the P-Pant transferase superfamily. AcpS family. Mg(2+) serves as cofactor.

Its subcellular location is the cytoplasm. It catalyses the reaction apo-[ACP] + CoA = holo-[ACP] + adenosine 3',5'-bisphosphate + H(+). Functionally, transfers the 4'-phosphopantetheine moiety from coenzyme A to a Ser of acyl-carrier-protein. The polypeptide is Holo-[acyl-carrier-protein] synthase (Paraburkholderia phymatum (strain DSM 17167 / CIP 108236 / LMG 21445 / STM815) (Burkholderia phymatum)).